The primary structure comprises 363 residues: Electron transfer flavoprotein subunit alpha, mitochondrial (363 aa).

The transit peptide at 1–24 (MTRTVLLRALTKNKFVASNAPRSI) directs the protein to the mitochondrion. 303–331 (LYMAFGVSGAIQHLAGIKDSKVIVAVNKD) contributes to the FAD binding site.

Belongs to the ETF alpha-subunit/FixB family. Heterodimer of an alpha and a beta subunit. Requires FAD as cofactor.

The protein localises to the mitochondrion matrix. Its function is as follows. The electron transfer flavoprotein serves as a specific electron acceptor for several dehydrogenases, including five acyl-CoA dehydrogenases, glutaryl-CoA and sarcosine dehydrogenase. It transfers the electrons to the main mitochondrial respiratory chain via ETF-ubiquinone oxidoreductase (ETF dehydrogenase). Involved in leucine catabolism and in phytol degradation. This is Electron transfer flavoprotein subunit alpha, mitochondrial (ETFA) from Arabidopsis thaliana (Mouse-ear cress).